Consider the following 343-residue polypeptide: Ribosomal RNA small subunit methyltransferase C (343 aa).

Belongs to the methyltransferase superfamily. RsmC family. As to quaternary structure, monomer.

It is found in the cytoplasm. The enzyme catalyses guanosine(1207) in 16S rRNA + S-adenosyl-L-methionine = N(2)-methylguanosine(1207) in 16S rRNA + S-adenosyl-L-homocysteine + H(+). Its function is as follows. Specifically methylates the guanine in position 1207 of 16S rRNA in the 30S particle. The chain is Ribosomal RNA small subunit methyltransferase C from Escherichia coli O1:K1 / APEC.